The sequence spans 183 residues: NADH-quinone oxidoreductase subunit B (183 aa).

Residues C60, C61, C125, and C154 each contribute to the [4Fe-4S] cluster site.

This sequence belongs to the complex I 20 kDa subunit family. NDH-1 is composed of 14 different subunits. Subunits NuoB, C, D, E, F, and G constitute the peripheral sector of the complex. Requires [4Fe-4S] cluster as cofactor.

The protein localises to the cell inner membrane. The enzyme catalyses a quinone + NADH + 5 H(+)(in) = a quinol + NAD(+) + 4 H(+)(out). Its function is as follows. NDH-1 shuttles electrons from NADH, via FMN and iron-sulfur (Fe-S) centers, to quinones in the respiratory chain. The immediate electron acceptor for the enzyme in this species is believed to be ubiquinone. Couples the redox reaction to proton translocation (for every two electrons transferred, four hydrogen ions are translocated across the cytoplasmic membrane), and thus conserves the redox energy in a proton gradient. This is NADH-quinone oxidoreductase subunit B from Desulfovibrio desulfuricans (strain ATCC 27774 / DSM 6949 / MB).